The sequence spans 139 residues: Large ribosomal subunit protein bL21 (139 aa).

Belongs to the bacterial ribosomal protein bL21 family. Part of the 50S ribosomal subunit. Contacts protein L20.

This protein binds to 23S rRNA in the presence of protein L20. The protein is Large ribosomal subunit protein bL21 of Prochlorococcus marinus (strain NATL2A).